Consider the following 442-residue polypeptide: tRNA-2-methylthio-N(6)-dimethylallyladenosine synthase (442 aa).

The MTTase N-terminal domain maps to 5–122 (KKVFIKTLGC…LPEMIKRKQS (118 aa)). 6 residues coordinate [4Fe-4S] cluster: Cys14, Cys51, Cys85, Cys159, Cys163, and Cys166. In terms of domain architecture, Radical SAM core spans 145-378 (KAEGAKAYVS…DLLNSNAQII (234 aa)). The 63-residue stretch at 380-442 (RQMVGTEQRI…LPNSLRGELI (63 aa)) folds into the TRAM domain.

This sequence belongs to the methylthiotransferase family. MiaB subfamily. As to quaternary structure, monomer. It depends on [4Fe-4S] cluster as a cofactor.

The protein resides in the cytoplasm. The catalysed reaction is N(6)-dimethylallyladenosine(37) in tRNA + (sulfur carrier)-SH + AH2 + 2 S-adenosyl-L-methionine = 2-methylsulfanyl-N(6)-dimethylallyladenosine(37) in tRNA + (sulfur carrier)-H + 5'-deoxyadenosine + L-methionine + A + S-adenosyl-L-homocysteine + 2 H(+). Functionally, catalyzes the methylthiolation of N6-(dimethylallyl)adenosine (i(6)A), leading to the formation of 2-methylthio-N6-(dimethylallyl)adenosine (ms(2)i(6)A) at position 37 in tRNAs that read codons beginning with uridine. The polypeptide is tRNA-2-methylthio-N(6)-dimethylallyladenosine synthase (Francisella philomiragia subsp. philomiragia (strain ATCC 25017 / CCUG 19701 / FSC 153 / O#319-036)).